The sequence spans 189 residues: Protein GrpE (189 aa).

Residues 1-31 form a disordered region; that stretch reads MSKKHMKGNGGEVPENSEMSGSEELVAVEPG.

The protein belongs to the GrpE family. In terms of assembly, homodimer.

The protein resides in the cytoplasm. In terms of biological role, participates actively in the response to hyperosmotic and heat shock by preventing the aggregation of stress-denatured proteins, in association with DnaK and GrpE. It is the nucleotide exchange factor for DnaK and may function as a thermosensor. Unfolded proteins bind initially to DnaJ; upon interaction with the DnaJ-bound protein, DnaK hydrolyzes its bound ATP, resulting in the formation of a stable complex. GrpE releases ADP from DnaK; ATP binding to DnaK triggers the release of the substrate protein, thus completing the reaction cycle. Several rounds of ATP-dependent interactions between DnaJ, DnaK and GrpE are required for fully efficient folding. This Syntrophobacter fumaroxidans (strain DSM 10017 / MPOB) protein is Protein GrpE.